Reading from the N-terminus, the 573-residue chain is 2-succinyl-5-enolpyruvyl-6-hydroxy-3-cyclohexene-1-carboxylate synthase (573 aa).

It belongs to the TPP enzyme family. MenD subfamily. As to quaternary structure, homodimer. The cofactor is Mg(2+). Mn(2+) serves as cofactor. Thiamine diphosphate is required as a cofactor.

The enzyme catalyses isochorismate + 2-oxoglutarate + H(+) = 5-enolpyruvoyl-6-hydroxy-2-succinyl-cyclohex-3-ene-1-carboxylate + CO2. It functions in the pathway quinol/quinone metabolism; 1,4-dihydroxy-2-naphthoate biosynthesis; 1,4-dihydroxy-2-naphthoate from chorismate: step 2/7. Its pathway is quinol/quinone metabolism; menaquinone biosynthesis. In terms of biological role, catalyzes the thiamine diphosphate-dependent decarboxylation of 2-oxoglutarate and the subsequent addition of the resulting succinic semialdehyde-thiamine pyrophosphate anion to isochorismate to yield 2-succinyl-5-enolpyruvyl-6-hydroxy-3-cyclohexene-1-carboxylate (SEPHCHC). This Shewanella sp. (strain ANA-3) protein is 2-succinyl-5-enolpyruvyl-6-hydroxy-3-cyclohexene-1-carboxylate synthase.